Consider the following 274-residue polypeptide: Cytochrome b-c1 complex subunit Rieske, mitochondrial (274 aa).

Residues 79 to 103 are Mitochondrial matrix-facing; that stretch reads SHTDIKVPDFSDYRRSEVLDKTKSS. A helical membrane pass occupies residues 104–140; that stretch reads RESSDARKGFSYLVTAATAVGVTYAAKSIVTQFVSSM. Over 141 to 274 the chain is Mitochondrial intermembrane; the sequence is SASADVLAMS…FTGDDMVIVG (134 aa). The Rieske domain maps to 187 to 272; that stretch reads EAAVELSQLR…YEFTGDDMVI (86 aa). The [2Fe-2S] cluster site is built by Cys217, His219, Cys236, His239, and Ser241. An intrachain disulfide couples Cys222 to Cys238.

This sequence belongs to the Rieske iron-sulfur protein family. Component of the ubiquinol-cytochrome c oxidoreductase (cytochrome b-c1 complex, complex III, CIII), a multisubunit enzyme composed of 11 subunits. The complex is composed of 3 respiratory subunits cytochrome b, cytochrome c1 and Rieske protein UQCRFS1, 2 core protein subunits UQCRC1/QCR1 and UQCRC2/QCR2, and 6 low-molecular weight protein subunits UQCRH/QCR6, UQCRB/QCR7, UQCRQ/QCR8, UQCR10/QCR9, UQCR11/QCR10 and subunit 9, the cleavage product of Rieske protein UQCRFS1. The complex exists as an obligatory dimer and forms supercomplexes (SCs) in the inner mitochondrial membrane with NADH-ubiquinone oxidoreductase (complex I, CI) and cytochrome c oxidase (complex IV, CIV), resulting in different assemblies (supercomplex SCI(1)III(2)IV(1) and megacomplex MCI(2)III(2)IV(2)). Incorporation of the Rieske protein UQCRFS1 is the penultimate step in complex III assembly. Interacts with TTC19, which is involved in the clearance of UQCRFS1 fragments. In terms of assembly, component of the ubiquinol-cytochrome c oxidoreductase (cytochrome b-c1 complex, complex III, CIII). Subunit 9 corresponds to the mitochondrial targeting sequence (MTS) of Rieske protein UQCRFS1. It is retained after processing and incorporated inside complex III, where it remains bound to the complex and localizes between the 2 core subunits UQCRC1/QCR1 and UQCRC2/QCR2. [2Fe-2S] cluster serves as cofactor. Post-translationally, proteolytic processing is necessary for the correct insertion of UQCRFS1 in the complex III dimer. Several fragments are generated during UQCRFS1 insertion, most probably due to the endogenous matrix-processing peptidase (MPP) activity of the 2 core protein subunits UQCRC1/QCR1 and UQCRC2/QCR2, which are homologous to the 2 mitochondrial-processing peptidase (MPP) subunits beta-MPP and alpha-MPP respectively. The action of the protease is also necessary for the clearance of the UQCRFS1 fragments.

It is found in the mitochondrion inner membrane. It catalyses the reaction a quinol + 2 Fe(III)-[cytochrome c](out) = a quinone + 2 Fe(II)-[cytochrome c](out) + 2 H(+)(out). In terms of biological role, component of the ubiquinol-cytochrome c oxidoreductase, a multisubunit transmembrane complex that is part of the mitochondrial electron transport chain which drives oxidative phosphorylation. The respiratory chain contains 3 multisubunit complexes succinate dehydrogenase (complex II, CII), ubiquinol-cytochrome c oxidoreductase (cytochrome b-c1 complex, complex III, CIII) and cytochrome c oxidase (complex IV, CIV), that cooperate to transfer electrons derived from NADH and succinate to molecular oxygen, creating an electrochemical gradient over the inner membrane that drives transmembrane transport and the ATP synthase. The cytochrome b-c1 complex catalyzes electron transfer from ubiquinol to cytochrome c, linking this redox reaction to translocation of protons across the mitochondrial inner membrane, with protons being carried across the membrane as hydrogens on the quinol. In the process called Q cycle, 2 protons are consumed from the matrix, 4 protons are released into the intermembrane space and 2 electrons are passed to cytochrome c. The Rieske protein is a catalytic core subunit containing a [2Fe-2S] iron-sulfur cluster. It cycles between 2 conformational states during catalysis to transfer electrons from the quinol bound in the Q(0) site in cytochrome b to cytochrome c1. Incorporation of UQCRFS1 is the penultimate step in complex III assembly. Component of the ubiquinol-cytochrome c oxidoreductase (cytochrome b-c1 complex, complex III, CIII). UQCRFS1 undergoes proteolytic processing once it is incorporated in the complex III dimer. One of the fragments, called subunit 9, corresponds to its mitochondrial targeting sequence (MTS). The proteolytic processing is necessary for the correct insertion of UQCRFS1 in the complex III dimer, but the persistence of UQCRFS1-derived fragments may prevent newly imported UQCRFS1 to be processed and assembled into complex III and is detrimental for the complex III structure and function. This is Cytochrome b-c1 complex subunit Rieske, mitochondrial (UQCRFS1) from Lagothrix lagotricha (Brown woolly monkey).